Here is a 340-residue protein sequence, read N- to C-terminus: Phosphoribosylformylglycinamidine cyclo-ligase (340 aa).

The protein belongs to the AIR synthase family.

Its subcellular location is the cytoplasm. The catalysed reaction is 2-formamido-N(1)-(5-O-phospho-beta-D-ribosyl)acetamidine + ATP = 5-amino-1-(5-phospho-beta-D-ribosyl)imidazole + ADP + phosphate + H(+). Its pathway is purine metabolism; IMP biosynthesis via de novo pathway; 5-amino-1-(5-phospho-D-ribosyl)imidazole from N(2)-formyl-N(1)-(5-phospho-D-ribosyl)glycinamide: step 2/2. The protein is Phosphoribosylformylglycinamidine cyclo-ligase of Streptococcus pyogenes serotype M2 (strain MGAS10270).